Consider the following 461-residue polypeptide: MSPILTNRQAEELHKSIIAYLTANNLLNTANTLRAELNLSENAFDTATAKKYETLLEKKWTSVVRLQKKIMDLESRMSALQTELDNATPISLAKRNKDPASWIPTAPARHALESHRDTINSVAFHPIFSSIASGSDDCTIKIWDWELGELERTIKGHTRAVVDVDFGGPRGGILLASCSSDLSIKLWDPANEYKNIRTLLGHDHSVSAVRFIPLGASGAPSSGNLLVSASRDKSLKIWDVNTGYCVRTLQGHTAWVRDVYPSPDGRFLLSTGDDSTARLWDISVSNPESKVTMFGHDHFNECCALAPSSSYQYLSPLTGLKKPPAASSTAEFMATGSRDKTIKLWDARGTCLMTLVGHDNWIRALAFHPGGKYLFSVSDDRTLRCWDLSQEGKCIKVMRDAHERFITCLRWAPSIFKDTPTGHGAGDGRNGDSKKTEGPDVQIRCVIATGGVDMKLRIFAN.

The LisH domain occupies 9–41; it reads QAEELHKSIIAYLTANNLLNTANTLRAELNLSE. WD repeat units lie at residues 114 to 155, 157 to 197, 201 to 248, 251 to 290, 312 to 355, 357 to 396, and 401 to 457; these read SHRD…RTIK, HTRA…KNIR, GHDH…CVRT, GHTAWVRDVYPSPDGRFLLSTGDDSTARLWDISVSNPESK, QYLS…LMTL, GHDNWIRALAFHPGGKYLFSVSDDRTLRCWDLSQEGKCIK, and AHER…MKLR.

The protein belongs to the WD repeat LIS1/nudF family. As to quaternary structure, self-associates. Interacts with NDL1 and dynein.

Its subcellular location is the cytoplasm. It is found in the cytoskeleton. It localises to the spindle pole. Functionally, positively regulates the activity of the minus-end directed microtubule motor protein dynein. May enhance dynein-mediated microtubule sliding by targeting dynein to the microtubule plus end. Required for nuclear migration during vegetative growth as well as development. Required for retrograde early endosome (EE) transport from the hyphal tip. Required for localization of dynein to the mitotic spindle poles. Recruits additional proteins to the dynein complex at SPBs. This Arthroderma otae (strain ATCC MYA-4605 / CBS 113480) (Microsporum canis) protein is Nuclear distribution protein PAC1.